The following is a 542-amino-acid chain: Amino-acid acetyltransferase, mitochondrial (542 aa).

The N-terminal 14 residues, 1–14 (MLFRRLLTTKVGYH), are a transit peptide targeting the mitochondrion. The region spanning 368–534 (AGSAQLPAHK…LREYITYVRD (167 aa)) is the N-acetyltransferase domain.

This sequence belongs to the acetyltransferase family.

The protein localises to the mitochondrion. It catalyses the reaction L-glutamate + acetyl-CoA = N-acetyl-L-glutamate + CoA + H(+). It functions in the pathway amino-acid biosynthesis; L-arginine biosynthesis; N(2)-acetyl-L-ornithine from L-glutamate: step 1/4. Its function is as follows. N-acetylglutamate synthase involved in arginine biosynthesis. The polypeptide is Amino-acid acetyltransferase, mitochondrial (ARG2) (Eremothecium gossypii (strain ATCC 10895 / CBS 109.51 / FGSC 9923 / NRRL Y-1056) (Yeast)).